The following is a 122-amino-acid chain: Large ribosomal subunit protein uL14 (122 aa).

This sequence belongs to the universal ribosomal protein uL14 family. As to quaternary structure, part of the 50S ribosomal subunit. Forms a cluster with proteins L3 and L19. In the 70S ribosome, L14 and L19 interact and together make contacts with the 16S rRNA in bridges B5 and B8.

Binds to 23S rRNA. Forms part of two intersubunit bridges in the 70S ribosome. The polypeptide is Large ribosomal subunit protein uL14 (Campylobacter lari (strain RM2100 / D67 / ATCC BAA-1060)).